Consider the following 397-residue polypeptide: MTTLLNPYFGEFGGMYVPQILMPALRQLEEAFVSAQKDPEFQAQFNDLLKNYAGRPTALTKCQNITAGTNTTLYLKREDLLHGGAHKTNQVLGQALLAKRMGKTEIIAETGAGQHGVASALASALLGLKCRIYMGAKDVERQSPNVFRMRLMGAEVIPVHSGSATLKDACNEALRDWSGSYETAHYMLGTAAGPHPYPTIVREFQRMIGEETKAQILEREGRLPDAVIACVGGGSNAIGMFADFINETNVGLIGVEPGGHGIETGEHGAPLKHGRVGIYFGMKAPMMQTEDGQIEESYSISAGLDFPSVGPQHAYLNSTGRADYVSITDDEALEAFKTLCLHEGIIPALESSHALAHALKMMRENPDKEQLLVVNLSGRGDKDIFTVHDILKARGEI.

The residue at position 87 (Lys-87) is an N6-(pyridoxal phosphate)lysine.

This sequence belongs to the TrpB family. Tetramer of two alpha and two beta chains. Pyridoxal 5'-phosphate serves as cofactor.

The enzyme catalyses (1S,2R)-1-C-(indol-3-yl)glycerol 3-phosphate + L-serine = D-glyceraldehyde 3-phosphate + L-tryptophan + H2O. It participates in amino-acid biosynthesis; L-tryptophan biosynthesis; L-tryptophan from chorismate: step 5/5. Functionally, the beta subunit is responsible for the synthesis of L-tryptophan from indole and L-serine. The sequence is that of Tryptophan synthase beta chain from Escherichia coli O139:H28 (strain E24377A / ETEC).